Reading from the N-terminus, the 145-residue chain is U20-hexatoxin-Hi1a (145 aa).

The N-terminal stretch at 1 to 16 is a signal peptide; it reads MYQFLIIVILAAFVNG. Thyroglobulin type-1 domains are found at residues 20 to 73 and 82 to 145; these read KTEC…GQPM and ACEC…RLEC. 5 disulfides stabilise this stretch: Cys23-Cys45, Cys56-Cys63, Cys85-Cys106, Cys117-Cys124, and Cys126-Cys145.

Expressed by the venom gland.

It localises to the secreted. In terms of biological role, cysteine proteinase inhibitor. This is U20-hexatoxin-Hi1a from Hadronyche infensa (Fraser island funnel-web spider).